A 360-amino-acid chain; its full sequence is Abhydrolase domain-containing protein lid-1 (360 aa).

The 131-residue stretch at 73–203 (AIVFIPGLGA…MSFLGGVAGY (131 aa)) folds into the AB hydrolase-1 domain.

It belongs to the peptidase S33 family. ABHD4/ABHD5 subfamily. In terms of assembly, interacts with atgl-1.

It localises to the lipid droplet. Functionally, acts coordinately with atgl-1 within the lipolytic cascade to distribute stored energy to tissues during nutritional deprivation. This chain is Abhydrolase domain-containing protein lid-1, found in Caenorhabditis elegans.